We begin with the raw amino-acid sequence, 237 residues long: 2-C-methyl-D-erythritol 4-phosphate cytidylyltransferase (237 aa).

It belongs to the IspD/TarI cytidylyltransferase family. IspD subfamily.

It carries out the reaction 2-C-methyl-D-erythritol 4-phosphate + CTP + H(+) = 4-CDP-2-C-methyl-D-erythritol + diphosphate. It participates in isoprenoid biosynthesis; isopentenyl diphosphate biosynthesis via DXP pathway; isopentenyl diphosphate from 1-deoxy-D-xylulose 5-phosphate: step 2/6. Functionally, catalyzes the formation of 4-diphosphocytidyl-2-C-methyl-D-erythritol from CTP and 2-C-methyl-D-erythritol 4-phosphate (MEP). This Acidithiobacillus ferrooxidans (strain ATCC 23270 / DSM 14882 / CIP 104768 / NCIMB 8455) (Ferrobacillus ferrooxidans (strain ATCC 23270)) protein is 2-C-methyl-D-erythritol 4-phosphate cytidylyltransferase.